Reading from the N-terminus, the 111-residue chain is Nucleoid-associated protein Tmel_0542 (111 aa).

The protein belongs to the YbaB/EbfC family. As to quaternary structure, homodimer.

It is found in the cytoplasm. Its subcellular location is the nucleoid. Functionally, binds to DNA and alters its conformation. May be involved in regulation of gene expression, nucleoid organization and DNA protection. The protein is Nucleoid-associated protein Tmel_0542 of Thermosipho melanesiensis (strain DSM 12029 / CIP 104789 / BI429).